The following is a 493-amino-acid chain: Probable protein phosphatase 2C 40 (493 aa).

Residues 145 to 480 enclose the PPM-type phosphatase domain; sequence LLSAMEVQVA…DDVTIMVITL (336 aa). Asp180, Gly181, Asp408, and Asp471 together coordinate Mn(2+).

It belongs to the PP2C family. Requires Mg(2+) as cofactor. The cofactor is Mn(2+).

It carries out the reaction O-phospho-L-seryl-[protein] + H2O = L-seryl-[protein] + phosphate. The catalysed reaction is O-phospho-L-threonyl-[protein] + H2O = L-threonyl-[protein] + phosphate. The polypeptide is Probable protein phosphatase 2C 40 (Arabidopsis thaliana (Mouse-ear cress)).